The sequence spans 286 residues: Translocon-associated protein subunit alpha (286 aa).

Residues 1-23 form the signal peptide; sequence MRVLPRLLLLLLLAFPAAVLLRG. At 24–207 the chain is on the lumenal side; that stretch reads GPGGSLVAAQ…EREDGLDGET (184 aa). A compositionally biased stretch (acidic residues) spans 37 to 75; the sequence is EDEETVEDSIIEDEDDEAEVEEDEPTDLAEDKEEEDVSG. The segment at 37 to 83 is disordered; sequence EDEETVEDSIIEDEDDEAEVEEDEPTDLAEDKEEEDVSGEPEASPSA. N136 and N191 each carry an N-linked (GlcNAc...) asparagine glycan. The chain crosses the membrane as a helical span at residues 208 to 228; sequence IFMYMFLAGLGLLVVVGLHQL. Residues 229–286 lie on the Cytoplasmic side of the membrane; the sequence is LESRKRKRPIQKVEMGTSSQNDVDMSWIPQETLNQINKASPRRLPRKRAQKRSVGSDE. S247 is subject to Phosphoserine. At T260 the chain carries Phosphothreonine. The disordered stretch occupies residues 261-286; that stretch reads LNQINKASPRRLPRKRAQKRSVGSDE. S268 is subject to Phosphoserine. The segment covering 268-279 has biased composition (basic residues); the sequence is SPRRLPRKRAQK.

This sequence belongs to the TRAP-alpha family. In terms of assembly, heterotetramer of TRAP-alpha, TRAP-beta, TRAP-delta and TRAP-gamma. Interacts with palmitoylated calnexin (CALX), the interaction is required for efficient folding of glycosylated proteins. Phosphorylated in its cytoplasmic tail.

Its subcellular location is the endoplasmic reticulum membrane. Functionally, TRAP proteins are part of a complex whose function is to bind calcium to the ER membrane and thereby regulate the retention of ER resident proteins. May be involved in the recycling of the translocation apparatus after completion of the translocation process or may function as a membrane-bound chaperone facilitating folding of translocated proteins. In Canis lupus familiaris (Dog), this protein is Translocon-associated protein subunit alpha (SSR1).